We begin with the raw amino-acid sequence, 387 residues long: RNA polymerase II elongation factor ELL3 (387 aa).

Disordered stretches follow at residues 127–148 and 186–275; these read LTEG…EGHP and LSNR…EEVP. Positions 230–239 are enriched in polar residues; the sequence is SPLQGLSNQD. S240 bears the Phosphoserine mark. Positions 240–251 are enriched in acidic residues; the sequence is SPEEQDWGQDAD. Residues 257–271 are compositionally biased toward low complexity; it reads EQSLSVQSASESPSP. One can recognise an OCEL domain in the interval 275 to 385; it reads PDYLLQYSTI…LILEFEEKNR (111 aa).

Belongs to the ELL/occludin family. As to quaternary structure, interacts with AFF4. Component of the super elongation complex (SEC), at least composed of EAF1, EAF2, CDK9, MLLT3/AF9, AFF (AFF1 or AFF4), the P-TEFb complex and ELL (ELL, ELL2 or ELL3). Component of the little elongation complex (LEC), at least composed of ELL (ELL, ELL2 or ELL3), ZC3H8, ICE1 and ICE2.

Its subcellular location is the nucleus. In terms of biological role, enhancer-binding elongation factor that specifically binds enhancers in embryonic stem cells (ES cells), marks them, and is required for their future activation during stem cell specification. Elongation factor component of the super elongation complex (SEC), a complex required to increase the catalytic rate of RNA polymerase II transcription by suppressing transient pausing by the polymerase at multiple sites along the DNA. Component of the little elongation complex (LEC), a complex required to regulate small nuclear RNA (snRNA) gene transcription by RNA polymerase II and III. Does not only bind to enhancer regions of active genes, but also marks the enhancers that are in a poised or inactive state in ES cells and is required for establishing proper RNA polymerase II occupancy at developmentally regulated genes in a cohesin-dependent manner. Probably required for priming developmentally regulated genes for later recruitment of the super elongation complex (SEC), for transcriptional activation during differentiation. Required for recruitment of P-TEFb within SEC during differentiation. Probably preloaded on germ cell chromatin, suggesting that it may prime gene activation by marking enhancers as early as in the germ cells. Promoting epithelial-mesenchymal transition (EMT). The chain is RNA polymerase II elongation factor ELL3 (Ell3) from Rattus norvegicus (Rat).